A 229-amino-acid chain; its full sequence is Enolase-phosphatase E1 (229 aa).

The protein belongs to the HAD-like hydrolase superfamily. MasA/MtnC family. Monomer. It depends on Mg(2+) as a cofactor.

It carries out the reaction 5-methylsulfanyl-2,3-dioxopentyl phosphate + H2O = 1,2-dihydroxy-5-(methylsulfanyl)pent-1-en-3-one + phosphate. The protein operates within amino-acid biosynthesis; L-methionine biosynthesis via salvage pathway; L-methionine from S-methyl-5-thio-alpha-D-ribose 1-phosphate: step 3/6. Its pathway is amino-acid biosynthesis; L-methionine biosynthesis via salvage pathway; L-methionine from S-methyl-5-thio-alpha-D-ribose 1-phosphate: step 4/6. Its function is as follows. Bifunctional enzyme that catalyzes the enolization of 2,3-diketo-5-methylthiopentyl-1-phosphate (DK-MTP-1-P) into the intermediate 2-hydroxy-3-keto-5-methylthiopentenyl-1-phosphate (HK-MTPenyl-1-P), which is then dephosphorylated to form the acireductone 1,2-dihydroxy-3-keto-5-methylthiopentene (DHK-MTPene). This is Enolase-phosphatase E1 from Citrobacter koseri (strain ATCC BAA-895 / CDC 4225-83 / SGSC4696).